The chain runs to 189 residues: dCTP deaminase (189 aa).

Residues 112–117 (KSTYAR), 136–138 (TLE), Gln157, Tyr171, and Gln181 each bind dCTP. Residue Glu138 is the Proton donor/acceptor of the active site.

The protein belongs to the dCTP deaminase family. As to quaternary structure, homotrimer.

The catalysed reaction is dCTP + H2O + H(+) = dUTP + NH4(+). It functions in the pathway pyrimidine metabolism; dUMP biosynthesis; dUMP from dCTP (dUTP route): step 1/2. Its function is as follows. Catalyzes the deamination of dCTP to dUTP. The sequence is that of dCTP deaminase from Paraburkholderia xenovorans (strain LB400).